Consider the following 86-residue polypeptide: Small ribosomal subunit protein bS16 (86 aa).

It belongs to the bacterial ribosomal protein bS16 family.

The chain is Small ribosomal subunit protein bS16 from Bordetella avium (strain 197N).